The primary structure comprises 1152 residues: Calcium-activated potassium channel subunit alpha-1 (1152 aa).

Residues 1 to 37 (MSSNIHANHLSLDASSSSSSSSSSSSSSSSSSSSVHE) form a disordered region. The Extracellular portion of the chain corresponds to 1–60 (MSSNIHANHLSLDASSSSSSSSSSSSSSSSSSSSVHEPKMDALIIPVTMEVPCDSRGQRM). A compositionally biased stretch (low complexity) spans 15–34 (SSSSSSSSSSSSSSSSSSSS). The helical transmembrane segment at 61 to 81 (WWAFLASSMVTFFGGLFIILL) threads the bilayer. Over 82–152 (WRTLKYLWTV…MISAQTLTGR (71 aa)) the chain is Cytoplasmic. 3 S-palmitoyl cysteine lipidation sites follow: Cys-92, Cys-93, and Cys-95. Residues 153 to 173 (VLVVLVFALSIGALVIYFIDS) traverse the membrane as a helical segment. At 174-188 (SNPIESCQNFYKDFT) the chain is on the extracellular side. A helical membrane pass occupies residues 189–209 (LQIDMAFNVFFLLYFGLRFIA). Residues 210–213 (ANDK) lie on the Cytoplasmic side of the membrane. Residues 214-234 (LWFWLEVNSVVDFFTVPPVFV) form a helical membrane-spanning segment. Residues 235–238 (SVYL) are Extracellular-facing. Residues 239 to 259 (NRSWLGLRFLRALRLIQFSEI) traverse the membrane as a helical; Voltage-sensor segment. Over 260–274 (LQFLNILKTSNSIKL) the chain is Cytoplasmic. Residues 275–295 (VNLLSIFISTWLTAAGFIHLV) form a helical membrane-spanning segment. Residues 296–309 (ENSGDPWENFQNNQ) lie on the Extracellular side of the membrane. An intramembrane region (pore-forming) is located at residues 310–332 (ALTYWECVYLLMVTMSTVGYGDV). A Selectivity for potassium motif is present at residues 326 to 329 (TVGY). At 333 to 341 (YAKTTLGRL) the chain is on the extracellular side. Residues 342–362 (FMVFFILGGLAMFASYVPEII) traverse the membrane as a helical segment. Residues 363–1152 (ELIGNRKKYG…KQKYVQEERL (790 aa)) lie on the Cytoplasmic side of the membrane. Residues 381-523 (RKHIVVCGHI…WNWKEGDDAI (143 aa)) form the RCK N-terminal 1 domain. Residues Glu-413, Gln-436, and Glu-438 each coordinate Mg(2+). Positions 530-550 (LGFIAQSCLAQGLSTMLANLF) are segment S7. The segment S8 stretch occupies residues 587–607 (LSFPTVCELCFVKLKLLMIAI). The heme-binding motif stretch occupies residues 651–655 (CKACH). The segment at 675-703 (EQPSTLSPKKKQRNGGMRNSPSSSPKLMR) is disordered. A Phosphothreonine modification is found at Thr-679. Ser-681, Ser-694, and Ser-698 each carry phosphoserine. Residues 753–773 (VLSGHVVVCIFGDVSSALIGL) are segment S9. The region spanning 755 to 899 (SGHVVVCIFG…MDRSSPDNSP (145 aa)) is the RCK N-terminal 2 domain. A Phosphothreonine modification is found at Thr-886. Ser-894 and Ser-898 each carry phosphoserine. Residues 919 to 941 (TELVNDTNVQFLDQDDDDDPDTE) carry the Calcium bowl motif. Ca(2+)-binding residues include Gln-928, Asp-931, Asp-934, and Asp-936. A segment S10 region spans residues 948 to 968 (FACGTAFAVSVLDSLMSATYF). Positions 1102–1127 (RASLSHSSHSSQSSSKKSSSVHSIPS) are enriched in low complexity. Positions 1102–1152 (RASLSHSSHSSQSSSKKSSSVHSIPSTANRQNRPKSRESRDKQKYVQEERL) are disordered. Over residues 1136-1152 (KSRESRDKQKYVQEERL) the composition is skewed to basic and acidic residues. Residues Ser-1137 and Ser-1140 each carry the phosphoserine modification.

Belongs to the potassium channel family. Calcium-activated (TC 1.A.1.3) subfamily. KCa1.1/KCNMA1 sub-subfamily. As to quaternary structure, homotetramer; which constitutes the calcium-activated potassium channel. Interacts with beta subunits KCNMB1, KCNMB2, KCNMB3 and KCNMB4. Interacts with gamma subunits LRRC26, LRRC38, LRRC52 and LRRC55. Beta and gamma subunits are accessory, and modulate its activity. Interacts with RAB11B. In terms of processing, phosphorylated. Phosphorylation by kinases such as PKA and/or PKG. In smooth muscles, phosphorylation affects its activity. Post-translationally, palmitoylation by ZDHHC22 and ZDHHC23 within the intracellular linker between the S0 and S1 transmembrane domains regulates localization to the plasma membrane. Depalmitoylated by LYPLA1 and LYPLAL1, leading to retard exit from the trans-Golgi network.

Its subcellular location is the cell membrane. It catalyses the reaction K(+)(in) = K(+)(out). With respect to regulation, ethanol and carbon monoxide-bound heme increase channel activation. Heme inhibits channel activation. Functionally, potassium channel activated by both membrane depolarization or increase in cytosolic Ca(2+) that mediates export of K(+). It is also activated by the concentration of cytosolic Mg(2+). Its activation dampens the excitatory events that elevate the cytosolic Ca(2+) concentration and/or depolarize the cell membrane. It therefore contributes to repolarization of the membrane potential. Plays a key role in controlling excitability in a number of systems, such as regulation of the contraction of smooth muscle, the tuning of hair cells in the cochlea, regulation of transmitter release, and innate immunity. In smooth muscles, its activation by high level of Ca(2+), caused by ryanodine receptors in the sarcoplasmic reticulum, regulates the membrane potential. In cochlea cells, its number and kinetic properties partly determine the characteristic frequency of each hair cell and thereby helps to establish a tonotopic map. Kinetics of KCNMA1 channels are determined by alternative splicing, phosphorylation status and its combination with modulating beta subunits. Highly sensitive to both iberiotoxin (IbTx) and charybdotoxin (CTX). This Sus scrofa (Pig) protein is Calcium-activated potassium channel subunit alpha-1 (KCNMA1).